The primary structure comprises 191 residues: Leucyl/phenylalanyl-tRNA--protein transferase (191 aa).

This sequence belongs to the L/F-transferase family.

Its subcellular location is the cytoplasm. It carries out the reaction N-terminal L-lysyl-[protein] + L-leucyl-tRNA(Leu) = N-terminal L-leucyl-L-lysyl-[protein] + tRNA(Leu) + H(+). The catalysed reaction is N-terminal L-arginyl-[protein] + L-leucyl-tRNA(Leu) = N-terminal L-leucyl-L-arginyl-[protein] + tRNA(Leu) + H(+). It catalyses the reaction L-phenylalanyl-tRNA(Phe) + an N-terminal L-alpha-aminoacyl-[protein] = an N-terminal L-phenylalanyl-L-alpha-aminoacyl-[protein] + tRNA(Phe). Functions in the N-end rule pathway of protein degradation where it conjugates Leu, Phe and, less efficiently, Met from aminoacyl-tRNAs to the N-termini of proteins containing an N-terminal arginine or lysine. This chain is Leucyl/phenylalanyl-tRNA--protein transferase, found in Trichormus variabilis (strain ATCC 29413 / PCC 7937) (Anabaena variabilis).